Here is a 745-residue protein sequence, read N- to C-terminus: ATP-dependent zinc metalloprotease FtsH (745 aa).

The Cytoplasmic segment spans residues 1–11 (MNNRRNGLFRN). A helical membrane pass occupies residues 12–32 (SLFYILMFLSLMGIIYFFFGG). Residues 33 to 131 (NSGSQTQNIR…VTAKAEESSG (99 aa)) are Extracellular-facing. The helical transmembrane segment at 132–152 (IWVTLLMYIAPVILMLFLFYM) threads the bilayer. Over 153–745 (MMGQAGQGGG…SSQDDTNSQA (593 aa)) the chain is Cytoplasmic. 227–234 (GPPGTGKT) contributes to the ATP binding site. Histidine 449 contributes to the Zn(2+) binding site. Residue glutamate 450 is part of the active site. Zn(2+) is bound by residues histidine 453 and aspartate 525. A compositionally biased stretch (basic and acidic residues) spans 630–673 (MPEKDSNEFPSEKAATFEESKRELERREAEKHAQNQSADDKQAD). The tract at residues 630–745 (MPEKDSNEFP…SSQDDTNSQA (116 aa)) is disordered. The segment covering 690–704 (SESDASSEVSADSSV) has biased composition (low complexity). Positions 705-745 (NSTANSATESATDSDVATSATGLPNAESATPSSQDDTNSQA) are enriched in polar residues.

The protein in the central section; belongs to the AAA ATPase family. This sequence in the C-terminal section; belongs to the peptidase M41 family. Homohexamer. Zn(2+) is required as a cofactor.

The protein resides in the cell membrane. Functionally, acts as a processive, ATP-dependent zinc metallopeptidase for both cytoplasmic and membrane proteins. Plays a role in the quality control of integral membrane proteins. The sequence is that of ATP-dependent zinc metalloprotease FtsH from Lactiplantibacillus plantarum (strain ATCC BAA-793 / NCIMB 8826 / WCFS1) (Lactobacillus plantarum).